Consider the following 542-residue polypeptide: NAD-dependent deacetylase sir2D (542 aa).

2 disordered regions span residues M1–L37 and E136–T160. Residues N8 to K25 are compositionally biased toward low complexity. Positions N165 to N193 form a coiled coil. A Deacetylase sirtuin-type domain is found at A283–W542. H411 (proton acceptor) is an active-site residue. Residues C419, C422, C443, and C446 each coordinate Zn(2+).

Belongs to the sirtuin family. The cofactor is Zn(2+).

It carries out the reaction N(6)-acetyl-L-lysyl-[protein] + NAD(+) + H2O = 2''-O-acetyl-ADP-D-ribose + nicotinamide + L-lysyl-[protein]. In terms of biological role, NAD-dependent deacetylase, which plays an important role in the regulation of transcriptional repression. In Dictyostelium discoideum (Social amoeba), this protein is NAD-dependent deacetylase sir2D (sir2D).